We begin with the raw amino-acid sequence, 1392 residues long: ATP-dependent helicase/nuclease subunit A (1392 aa).

Residues 4–595 enclose the UvrD-like helicase ATP-binding domain; the sequence is FKPTPAQSKA…IVLGENFRSM (592 aa). 25–32 lines the ATP pocket; that stretch reads ASAGSGKT. The UvrD-like helicase C-terminal domain occupies 623-929; it reads AHLKYAATYY…NVMTIHGSKG (307 aa).

The protein belongs to the helicase family. AddA subfamily. As to quaternary structure, heterodimer of AddA and AddB/RexB. It depends on Mg(2+) as a cofactor.

The enzyme catalyses Couples ATP hydrolysis with the unwinding of duplex DNA by translocating in the 3'-5' direction.. It catalyses the reaction ATP + H2O = ADP + phosphate + H(+). Its function is as follows. The heterodimer acts as both an ATP-dependent DNA helicase and an ATP-dependent, dual-direction single-stranded exonuclease. Recognizes the chi site generating a DNA molecule suitable for the initiation of homologous recombination. The AddA nuclease domain is required for chi fragment generation; this subunit has the helicase and 3' -&gt; 5' nuclease activities. In Limosilactobacillus reuteri subsp. reuteri (strain JCM 1112) (Lactobacillus reuteri), this protein is ATP-dependent helicase/nuclease subunit A.